The chain runs to 212 residues: Thymidylate kinase (212 aa).

10–17 (GLEGAGKT) lines the ATP pocket.

Belongs to the thymidylate kinase family.

The enzyme catalyses dTMP + ATP = dTDP + ADP. Its function is as follows. Phosphorylation of dTMP to form dTDP in both de novo and salvage pathways of dTTP synthesis. The protein is Thymidylate kinase of Yersinia pestis bv. Antiqua (strain Antiqua).